Reading from the N-terminus, the 224-residue chain is Ion-translocating oxidoreductase complex subunit E (224 aa).

5 helical membrane-spanning segments follow: residues 51–71 (LGLG…VSLF), 81–101 (IPIY…LMNA), 105–125 (SLYQ…IVIG), 140–160 (MFDG…LGAI), and 194–214 (HFLL…ILAI).

Belongs to the NqrDE/RnfAE family. The complex is composed of six subunits: RnfA, RnfB, RnfC, RnfD, RnfE and RnfG.

The protein resides in the cell inner membrane. In terms of biological role, part of a membrane-bound complex that couples electron transfer with translocation of ions across the membrane. The sequence is that of Ion-translocating oxidoreductase complex subunit E from Pasteurella multocida (strain Pm70).